We begin with the raw amino-acid sequence, 225 residues long: U2 small nuclear ribonucleoprotein B'' (225 aa).

The RRM 1 domain occupies 7-86; it reads HTIYINNMND…KPMRIQYAKT (80 aa). A disordered region spans residues 100-144; that stretch reads DKEKKKEKKKAKTMEQAAAAANKKPGQGTPNAANTQGTAAPNPQV. Lysine 111 is modified (N6-acetyllysine; alternate). A Glycyl lysine isopeptide (Lys-Gly) (interchain with G-Cter in SUMO2); alternate cross-link involves residue lysine 111. A compositionally biased stretch (low complexity) spans 113–123; that stretch reads MEQAAAAANKK. A compositionally biased stretch (polar residues) spans 127–140; sequence GTPNAANTQGTAAP. Position 151 is a phosphotyrosine (tyrosine 151). Residues 151 to 225 enclose the RRM 2 domain; it reads YILFLNNLPE…HAMKITYAKK (75 aa).

The protein belongs to the RRM U1 A/B'' family. Identified in the spliceosome B complex. Identified in the spliceosome C complex. Present in a spliceosome complex assembled in vitro, and composed of SNRPB2, HPRP8BP and CRNKL1. Contributes to the binding of stem loop IV of U2 snRNA with SNRPP1.

Its subcellular location is the nucleus. Its function is as follows. Involved in pre-mRNA splicing as component of the spliceosome. Associated with sn-RNP U2, where it contributes to the binding of stem loop IV of U2 snRNA. This chain is U2 small nuclear ribonucleoprotein B'' (Snrpb2), found in Mus musculus (Mouse).